We begin with the raw amino-acid sequence, 61 residues long: Sec-independent protein translocase protein TatA (61 aa).

Residues 1-21 (MFGIGMPEMLIILVIILIIFG) traverse the membrane as a helical segment.

It belongs to the TatA/E family. In terms of assembly, the Tat system comprises two distinct complexes: a TatABC complex, containing multiple copies of TatA, TatB and TatC subunits, and a separate TatA complex, containing only TatA subunits. Substrates initially bind to the TatABC complex, which probably triggers association of the separate TatA complex to form the active translocon.

It is found in the cell inner membrane. In terms of biological role, part of the twin-arginine translocation (Tat) system that transports large folded proteins containing a characteristic twin-arginine motif in their signal peptide across membranes. TatA could form the protein-conducting channel of the Tat system. The protein is Sec-independent protein translocase protein TatA of Syntrophus aciditrophicus (strain SB).